We begin with the raw amino-acid sequence, 178 residues long: Acireductone dioxygenase (178 aa).

His87, His89, Glu93, and His132 together coordinate Fe(2+). 4 residues coordinate Ni(2+): His87, His89, Glu93, and His132.

This sequence belongs to the acireductone dioxygenase (ARD) family. Fe(2+) serves as cofactor. Ni(2+) is required as a cofactor.

It localises to the cytoplasm. The protein resides in the nucleus. The catalysed reaction is 1,2-dihydroxy-5-(methylsulfanyl)pent-1-en-3-one + O2 = 4-methylsulfanyl-2-oxobutanoate + formate + 2 H(+). It catalyses the reaction 1,2-dihydroxy-5-(methylsulfanyl)pent-1-en-3-one + O2 = 3-(methylsulfanyl)propanoate + CO + formate + 2 H(+). Its pathway is amino-acid biosynthesis; L-methionine biosynthesis via salvage pathway; L-methionine from S-methyl-5-thio-alpha-D-ribose 1-phosphate: step 5/6. Catalyzes 2 different reactions between oxygen and the acireductone 1,2-dihydroxy-3-keto-5-methylthiopentene (DHK-MTPene) depending upon the metal bound in the active site. Fe-containing acireductone dioxygenase (Fe-ARD) produces formate and 2-keto-4-methylthiobutyrate (KMTB), the alpha-ketoacid precursor of methionine in the methionine recycle pathway. Ni-containing acireductone dioxygenase (Ni-ARD) produces methylthiopropionate, carbon monoxide and formate, and does not lie on the methionine recycle pathway. In Candida albicans (strain SC5314 / ATCC MYA-2876) (Yeast), this protein is Acireductone dioxygenase.